The chain runs to 219 residues: Leukocyte surface antigen CD53 (219 aa).

The Cytoplasmic portion of the chain corresponds to 1–11 (MGMSSLKLLKY). The chain crosses the membrane as a helical span at residues 12–32 (VLFFFNLLFWICGCCILGFGI). Over 33 to 54 (YLLIHNNFGVLFHNLPSLTLGN) the chain is Extracellular. Residues 55-69 (VFVIVGSIIMVVAFL) form a helical membrane-spanning segment. At 70–80 (GCMGSIKENKC) the chain is on the cytoplasmic side. Residues 81-106 (LLMSFFILLLIILLAEVTLAILLFVY) traverse the membrane as a helical segment. Residues 107–181 (EQKLNEYVAK…AKARLWFHSN (75 aa)) are Extracellular-facing. 2 N-linked (GlcNAc...) asparagine glycosylation sites follow: Asn-129 and Asn-148. Residues 182–206 (FLYIGIITICVCVIEVLGMSFALTL) traverse the membrane as a helical segment. Residues 207 to 219 (NCQIDKTSQTIGL) lie on the Cytoplasmic side of the membrane.

It belongs to the tetraspanin (TM4SF) family. Interacts with SCIMP. Interacts with CD45/PTPRC. Interacts with IL7R. Interacts with RBL2 and PPP2CA. In terms of tissue distribution, B-cells, monocytes, macrophages, neutrophils, single (CD4 or CD8) positive thymocytes and peripheral T-cells.

Its subcellular location is the cell membrane. The protein localises to the cell junction. It localises to the membrane. It is found in the synapse. Structural component of specialized membrane microdomains known as tetraspanin-enriched microdomains (TERMs), which act as platforms for receptor clustering and signaling. Participates thereby in diverse biological functions such as cell signal transduction, adhesion, migration and protein trafficking. Plays a role in the activation of monocytes and B-cells. Acts as an essential regulator of B-cell development by promoting interleukin-7 receptor/IL7R signaling. Also promotes, in B-cells, the BCR signaling by recruiting PKC to the plasma membrane in order to phosphorylate its substrates. Plays an essential role in B- and T-cells homing to lymph nodes by stabilizing L-selectin/SELL cell surface expression. Also mediates metabolic and inflammatory functions in hepatocytes and adipose tissue by promoting TNF-alpha and LPS signaling independent of the immune compartment. This is Leukocyte surface antigen CD53 (CD53) from Homo sapiens (Human).